A 167-amino-acid chain; its full sequence is Leukotoxin-activating lysine-acyltransferase LktC serotype A1 (167 aa).

Active-site residues include H22 and D91.

This sequence belongs to the RTX toxin acyltransferase family.

It is found in the cytoplasm. It carries out the reaction a fatty acyl-[ACP] + L-lysyl-[protein] = N(6)-(fatty acyl)-L-lysyl-[protein] + holo-[ACP] + H(+). Involved in fatty acylation of the protoxin (LktA) at two internal lysine residues, thereby converting it to the active toxin. The chain is Leukotoxin-activating lysine-acyltransferase LktC serotype A1 (lktC) from Mannheimia haemolytica (Pasteurella haemolytica).